Reading from the N-terminus, the 47-residue chain is Wound-induced basic protein (47 aa).

A disordered region spans residues 1-47 (MIYDVNSPLFRSFLSQKGGSSDKRKTEEQKPKEHRPKASENKPIMTE). Basic and acidic residues predominate over residues 20 to 40 (SSDKRKTEEQKPKEHRPKASE).

Abundant in radicals and epicotyls of seedlings and higher in the roots than in stems and leaves of mature plants.

The sequence is that of Wound-induced basic protein (PR4) from Phaseolus vulgaris (Kidney bean).